Reading from the N-terminus, the 121-residue chain is Large ribosomal subunit protein uL18 (121 aa).

It belongs to the universal ribosomal protein uL18 family. As to quaternary structure, part of the 50S ribosomal subunit; part of the 5S rRNA/L5/L18/L25 subcomplex. Contacts the 5S and 23S rRNAs.

Functionally, this is one of the proteins that bind and probably mediate the attachment of the 5S RNA into the large ribosomal subunit, where it forms part of the central protuberance. This is Large ribosomal subunit protein uL18 from Ureaplasma parvum serovar 3 (strain ATCC 27815 / 27 / NCTC 11736).